Reading from the N-terminus, the 598-residue chain is Mitogen-activated protein kinase 19 (598 aa).

Residues 25–316 (YRILEVIGKG…AAEALADPYF (292 aa)) form the Protein kinase domain. Residues 31–39 (IGKGSYGVV) and K54 contribute to the ATP site. D151 acts as the Proton acceptor in catalysis. T187 carries the phosphothreonine modification. A TXY motif is present at residues 187–189 (TDY). At Y189 the chain carries Phosphotyrosine. T192 is modified (phosphothreonine). The segment at 396–486 (GKSGPVIPPD…VTYENDRNLK (91 aa)) is disordered. Positions 414–425 (SAVHSSAVNSNA) are enriched in low complexity.

This sequence belongs to the protein kinase superfamily. CMGC Ser/Thr protein kinase family. MAP kinase subfamily. In terms of processing, dually phosphorylated on Thr-187 and Tyr-189, which activates the enzyme.

The catalysed reaction is L-seryl-[protein] + ATP = O-phospho-L-seryl-[protein] + ADP + H(+). It catalyses the reaction L-threonyl-[protein] + ATP = O-phospho-L-threonyl-[protein] + ADP + H(+). Activated by threonine and tyrosine phosphorylation. The chain is Mitogen-activated protein kinase 19 (MPK19) from Arabidopsis thaliana (Mouse-ear cress).